A 488-amino-acid chain; its full sequence is Probable (S)-N-methylcoclaurine 3'-hydroxylase isozyme 2 (488 aa).

A helical transmembrane segment spans residues 2-21 (EVLSIAIVSFSFLLFLFFIL). C427 contributes to the heme binding site.

Belongs to the cytochrome P450 family. It depends on heme as a cofactor. As to expression, expressed at low levels in roots.

It localises to the endoplasmic reticulum membrane. The protein resides in the microsome membrane. It catalyses the reaction (S)-N-methylcoclaurine + reduced [NADPH--hemoprotein reductase] + O2 = (S)-3'-hydroxy-N-methylcoclaurine + oxidized [NADPH--hemoprotein reductase] + H2O + H(+). It functions in the pathway alkaloid biosynthesis; (S)-reticuline biosynthesis; (S)-reticuline from (S)-norcoclaurine: step 3/4. Functionally, 3'-hydroxylation of (S)-N-methylcoclaurine. The polypeptide is Probable (S)-N-methylcoclaurine 3'-hydroxylase isozyme 2 (CYP80B2) (Coptis japonica (Japanese goldthread)).